Here is a 947-residue protein sequence, read N- to C-terminus: Protein NLP8 (947 aa).

3 disordered regions span residues Arg114–Gly135, Ser509–Ser533, and Ser550–Val591. The span at Arg126–Gly135 shows a compositional bias: basic and acidic residues. 2 stretches are compositionally biased toward polar residues: residues Ser522–Ser533 and Ser550–Gln572. The span at Asp573–Thr587 shows a compositional bias: basic and acidic residues. In terms of domain architecture, RWP-RK spans Ala577–Gly671. A coiled-coil region spans residues Arg646 to Gln666. The segment covering Ser805–Ser815 has biased composition (low complexity). The tract at residues Ser805 to Glu828 is disordered. In terms of domain architecture, PB1 spans Thr847 to Leu929.

The protein localises to the nucleus. Functionally, probable transcription factor. The sequence is that of Protein NLP8 (NLP8) from Arabidopsis thaliana (Mouse-ear cress).